Reading from the N-terminus, the 135-residue chain is D-ribose pyranase (135 aa).

His20 (proton donor) is an active-site residue. Residues Asp28, His102, and 124–126 contribute to the substrate site; that span reads YAN.

The protein belongs to the RbsD / FucU family. RbsD subfamily. As to quaternary structure, homodecamer.

It localises to the cytoplasm. It catalyses the reaction beta-D-ribopyranose = beta-D-ribofuranose. It functions in the pathway carbohydrate metabolism; D-ribose degradation; D-ribose 5-phosphate from beta-D-ribopyranose: step 1/2. Catalyzes the interconversion of beta-pyran and beta-furan forms of D-ribose. In Rhodopirellula baltica (strain DSM 10527 / NCIMB 13988 / SH1), this protein is D-ribose pyranase.